The primary structure comprises 592 residues: Sodium- and chloride-dependent transporter XTRP3 (592 aa).

Over 1–5 (MEKAR) the chain is Cytoplasmic. A helical transmembrane segment spans residues 6-26 (PLWANSLQFVFACISYAVGLG). Over 27–42 (NVWRFPYLCQMYGGGS) the chain is Extracellular. A helical membrane pass occupies residues 43–63 (FLVPYIIMLIVEGMPLLYLEL). Residues 64–79 (AVGQRMRQGSIGAWRT) lie on the Cytoplasmic side of the membrane. The helical transmembrane segment at 80 to 100 (ISPYLSGVGVASVVVSFFLSM) threads the bilayer. At 101–165 (YYNVINAWAF…ISPSLQENGG (65 aa)) the chain is on the extracellular side. N131 carries an N-linked (GlcNAc...) asparagine glycan. The chain crosses the membrane as a helical span at residues 166-186 (VQWEPALCLLLAWLVVYLCIL). Residues 187–194 (RGTESTGK) lie on the Cytoplasmic side of the membrane. A helical membrane pass occupies residues 195-215 (VVYFTASLPYCVLIIYLIRGL). Residues 216 to 241 (TLHGATNGLMYMFTPKIEQLANPKAW) lie on the Extracellular side of the membrane. Residues 242 to 262 (INAATQIFFSLGLGFGSLIAF) traverse the membrane as a helical segment. Over 263-276 (ASYNEPSNNCQKHA) the chain is Cytoplasmic. A helical transmembrane segment spans residues 277–297 (IIVSLINSFTSIFASIVTFSI). The Extracellular portion of the chain corresponds to 298–389 (YGFKATFNYE…EAIKNMEVSQ (92 aa)). A glycan (N-linked (GlcNAc...) asparagine) is linked at N357. A helical transmembrane segment spans residues 390-410 (LWSVLYFFMLLMLGIGSMLGN). Over 411–431 (TAAILTPLTDSKIISSHLPKE) the chain is Cytoplasmic. Residues 432-452 (AISGLVCLVNCAIGMVFTMEA) form a helical membrane-spanning segment. Residues 453–465 (GNYWFDIFNDYAA) lie on the Extracellular side of the membrane. A helical membrane pass occupies residues 466 to 486 (TLSLLLIVLVETIAVCYVYGL). The Cytoplasmic portion of the chain corresponds to 487–504 (RRFESDLKAMTGRAVSWY). A helical membrane pass occupies residues 505-525 (WKVMWAGVSPLLIVSLFVFYL). The Extracellular portion of the chain corresponds to 526–554 (SDYILTGTLKYQAWDASQGQLVTKDYPAY). A helical transmembrane segment spans residues 555–575 (ALAVIGLLVASSTMCIPLAAL). The Cytoplasmic portion of the chain corresponds to 576 to 592 (GTFVQRRLKRGDADPVA).

This sequence belongs to the sodium:neurotransmitter symporter (SNF) (TC 2.A.22) family. SLC6A20 subfamily. As to expression, kidney and small intestine. Expressed in the S3 segment of the proximal tubule. Expressed in neurons.

It is found in the apical cell membrane. It catalyses the reaction L-proline(out) + chloride(out) + 2 Na(+)(out) = L-proline(in) + chloride(in) + 2 Na(+)(in). The enzyme catalyses L-pipecolate(out) + chloride(out) + 2 Na(+)(out) = L-pipecolate(in) + chloride(in) + 2 Na(+)(in). It carries out the reaction sarcosine(out) + chloride(out) + 2 Na(+)(out) = sarcosine(in) + chloride(in) + 2 Na(+)(in). The catalysed reaction is N-methyl-L-proline(out) + chloride(out) + 2 Na(+)(out) = N-methyl-L-proline(in) + chloride(in) + 2 Na(+)(in). It catalyses the reaction 2-methyl-2-(methylamino)propanoate(out) + chloride(out) + 2 Na(+)(out) = 2-methyl-2-(methylamino)propanoate(in) + chloride(in) + 2 Na(+)(in). The enzyme catalyses glycine betaine(out) + chloride(out) + 2 Na(+)(out) = glycine betaine(in) + chloride(in) + 2 Na(+)(in). It carries out the reaction glycine(out) + chloride(out) + 2 Na(+)(out) = glycine(in) + chloride(in) + 2 Na(+)(in). In terms of biological role, mediates the Na(+)- and Cl(-)-dependent uptake of imino acids such as L-proline, N-methyl-L-proline and pipecolate as well as N-methylated amino acids. Also transports glycine, regulates proline and glycine homeostasis in the brain playing a role in the modulation of NMDAR currents. The protein is Sodium- and chloride-dependent transporter XTRP3 of Homo sapiens (Human).